A 461-amino-acid polypeptide reads, in one-letter code: Coagulation factor IX (461 aa).

An N-terminal signal peptide occupies residues 1–28 (MQRVNMIMAESPGLITICLLGYLLSAEC). Positions 29–46 (TVFLDHENANKILNRPKR) are excised as a propeptide. Residues tyrosine 47, asparagine 48, glutamate 53, glutamate 54, glutamate 61, glutamate 63, glutamate 66, glutamate 67, glutamate 72, glutamate 73, and glutamate 76 each coordinate Ca(2+). The 46-residue stretch at 47-92 (YNSGKLEEFVQGNLERECMEEKCSFEEAREVFENTERTTEFWKQYV) folds into the Gla domain. Glutamate 53, glutamate 54, glutamate 61, glutamate 63, glutamate 66, glutamate 67, glutamate 72, glutamate 73, glutamate 76, glutamate 79, and glutamate 82 each carry 4-carboxyglutamate. Residue glutamate 61 coordinates Mg(2+). Cysteine 64 and cysteine 69 are disulfide-bonded. Glutamate 66 is a binding site for Mg(2+). Glutamate 72 is a Mg(2+) binding site. Glutamate 76 provides a ligand contact to Mg(2+). Glutamate 82 provides a ligand contact to Ca(2+). Residue glutamate 82 participates in Mg(2+) binding. A glycan (O-linked (GalNAc...) threonine) is linked at threonine 85. Positions 86, 93, 94, and 96 each coordinate Ca(2+). Glutamate 86 bears the 4-carboxyglutamate mark. Glutamate 86 is a binding site for Mg(2+). One can recognise an EGF-like 1; calcium-binding domain in the interval 93-129 (DGDQCESNPCLNGGSCKDDINSYECWCPFGFEGKNCE). Disulfide bonds link cysteine 97–cysteine 108, cysteine 102–cysteine 117, cysteine 119–cysteine 128, cysteine 134–cysteine 145, cysteine 141–cysteine 155, cysteine 157–cysteine 170, cysteine 178–cysteine 335, cysteine 252–cysteine 268, cysteine 382–cysteine 396, and cysteine 407–cysteine 435. O-linked (Glc...) serine glycosylation is present at serine 99. A glycan (O-linked (Fuc...) serine) is linked at serine 107. Residues aspartate 110 and aspartate 111 each coordinate Ca(2+). Aspartate 110 carries the post-translational modification (3R)-3-hydroxyaspartate. Serine 114 is modified (phosphoserine). Positions 130–171 (LDVTCNIKNGRCEQFCKNSADNKVVCSCTEGYRLAENQKSCE) constitute an EGF-like 2 domain. Positions 192–226 (AETVFPDVDYVNSTEAETILDNITQSTQSFNDFTR) are cleaved as a propeptide — activation peptide. Sulfotyrosine is present on tyrosine 201. Serine 204 is modified (phosphoserine). Threonine 205 is subject to Phosphothreonine; alternate. O-linked (GalNAc...) threonine; alternate glycosylation is present at threonine 205. N-linked (GlcNAc...) asparagine glycosylation occurs at asparagine 213. Residues threonine 215 and threonine 225 are each glycosylated (O-linked (GalNAc...) threonine). A Peptidase S1 domain is found at 227 to 459 (VVGGEDAKPG…YVNWIKEKTK (233 aa)). Histidine 267 functions as the Charge relay system in the catalytic mechanism. Ca(2+)-binding residues include glutamate 281, asparagine 283, glutamate 286, glutamate 288, and glutamate 291. Residue aspartate 315 is the Charge relay system of the active site. Catalysis depends on serine 411, which acts as the Charge relay system.

The protein belongs to the peptidase S1 family. Heterodimer of a light chain and a heavy chain; disulfide-linked. Interacts (inactive and activated) with F11 (activated) in calcium-dependent manner. Interacts with SERPINC1. Activated by factor XIa, which excises the activation peptide. The propeptide can also be removed by snake venom protease. Post-translationally, the iron and 2-oxoglutarate dependent 3-hydroxylation of aspartate and asparagine is (R) stereospecific within EGF domains. Activated by coagulation factor VIIa-tissue factor (F7-F3) complex in calcium-dependent manner. In terms of processing, predominantly O-glucosylated at Ser-99 by POGLUT1 in vitro.

It localises to the secreted. The enzyme catalyses Selective cleavage of Arg-|-Ile bond in factor X to form factor Xa.. Factor IX is a vitamin K-dependent plasma protein that participates in the intrinsic pathway of blood coagulation by converting factor X to its active form in the presence of Ca(2+) ions, phospholipids, and factor VIIIa. This Pan troglodytes (Chimpanzee) protein is Coagulation factor IX (F9).